The following is a 197-amino-acid chain: ATP-dependent Clp protease proteolytic subunit 1 (197 aa).

S88 acts as the Nucleophile in catalysis. H113 is a catalytic residue.

It belongs to the peptidase S14 family. In terms of assembly, fourteen ClpP subunits assemble into 2 heptameric rings which stack back to back to give a disk-like structure with a central cavity, resembling the structure of eukaryotic proteasomes.

It is found in the cytoplasm. It catalyses the reaction Hydrolysis of proteins to small peptides in the presence of ATP and magnesium. alpha-casein is the usual test substrate. In the absence of ATP, only oligopeptides shorter than five residues are hydrolyzed (such as succinyl-Leu-Tyr-|-NHMec, and Leu-Tyr-Leu-|-Tyr-Trp, in which cleavage of the -Tyr-|-Leu- and -Tyr-|-Trp bonds also occurs).. Its function is as follows. Cleaves peptides in various proteins in a process that requires ATP hydrolysis. Has a chymotrypsin-like activity. Plays a major role in the degradation of misfolded proteins. The sequence is that of ATP-dependent Clp protease proteolytic subunit 1 from Leifsonia xyli subsp. xyli (strain CTCB07).